Here is a 502-residue protein sequence, read N- to C-terminus: Glycerol kinase (502 aa).

Threonine 14 lines the ADP pocket. Residues threonine 14, threonine 15, and serine 16 each contribute to the ATP site. Threonine 14 serves as a coordination point for sn-glycerol 3-phosphate. Arginine 18 contacts ADP. Sn-glycerol 3-phosphate contacts are provided by arginine 84, glutamate 85, tyrosine 136, and aspartate 246. 5 residues coordinate glycerol: arginine 84, glutamate 85, tyrosine 136, aspartate 246, and glutamine 247. ADP is bound by residues threonine 268 and glycine 311. Positions 268, 311, 315, and 412 each coordinate ATP. ADP-binding residues include glycine 412 and asparagine 416.

It belongs to the FGGY kinase family. In terms of assembly, homotetramer and homodimer (in equilibrium). Heterodimer with EIIA-Glc. Binds 1 zinc ion per glycerol kinase EIIA-Glc dimer. The zinc ion is important for dimerization.

The enzyme catalyses glycerol + ATP = sn-glycerol 3-phosphate + ADP + H(+). It functions in the pathway polyol metabolism; glycerol degradation via glycerol kinase pathway; sn-glycerol 3-phosphate from glycerol: step 1/1. With respect to regulation, activity of this regulatory enzyme is affected by several metabolites. Allosterically and non-competitively inhibited by fructose 1,6-bisphosphate (FBP) and unphosphorylated phosphocarrier protein EIIA-Glc (III-Glc), an integral component of the bacterial phosphotransferase (PTS) system. In terms of biological role, key enzyme in the regulation of glycerol uptake and metabolism. Catalyzes the phosphorylation of glycerol to yield sn-glycerol 3-phosphate. The chain is Glycerol kinase from Salmonella typhimurium (strain LT2 / SGSC1412 / ATCC 700720).